The chain runs to 186 residues: Potassium-transporting ATPase KdpC subunit (186 aa).

Residues 10–30 (LTIITMVLCGFLFPLAITLIG) traverse the membrane as a helical segment.

The protein belongs to the KdpC family. The system is composed of three essential subunits: KdpA, KdpB and KdpC.

The protein localises to the cell membrane. Functionally, part of the high-affinity ATP-driven potassium transport (or Kdp) system, which catalyzes the hydrolysis of ATP coupled with the electrogenic transport of potassium into the cytoplasm. This subunit acts as a catalytic chaperone that increases the ATP-binding affinity of the ATP-hydrolyzing subunit KdpB by the formation of a transient KdpB/KdpC/ATP ternary complex. The polypeptide is Potassium-transporting ATPase KdpC subunit (Staphylococcus aureus (strain MSSA476)).